The sequence spans 272 residues: Adenylate kinase (272 aa).

55–60 (GAGKGT) provides a ligand contact to ATP. The interval 75-104 (ATGDMLRSQVAKKTPLGKEAKKIMDQGGLV) is NMP. Residues threonine 76, arginine 81, 102–104 (GLV), 131–134 (GFPR), and glutamine 138 each bind AMP. Positions 172–209 (GRLVHPASGRSYHKIFNPPKQDMKDDITGEPLIQRSDD) are LID. ATP-binding positions include arginine 173 and 182–183 (SY). Residues arginine 206 and arginine 217 each coordinate AMP. Glutamine 245 is an ATP binding site.

Belongs to the adenylate kinase family. AK2 subfamily. As to quaternary structure, monomer.

The protein localises to the cytoplasm. It localises to the cytosol. Its subcellular location is the mitochondrion intermembrane space. The enzyme catalyses AMP + ATP = 2 ADP. Functionally, catalyzes the reversible transfer of the terminal phosphate group between ATP and AMP. Plays an important role in cellular energy homeostasis and in adenine nucleotide metabolism. Adenylate kinase activity is critical for regulation of the phosphate utilization and the AMP de novo biosynthesis pathways. In Talaromyces marneffei (Penicillium marneffei), this protein is Adenylate kinase (adk1).